The sequence spans 449 residues: Chromosomal replication initiator protein DnaA (449 aa).

Positions 1–73 (MDADLKNLWD…ANSIKAVCSK (73 aa)) are domain I, interacts with DnaA modulators. The segment at 73 to 110 (KLYTIEFIIMSEIYEKEEIKSSSNQKSKAIVVNDEMSS) is domain II. The domain III, AAA+ region stretch occupies residues 111–327 (TLNPKYTFNS…GALIRIIAYS (217 aa)). G155, G157, K158, and T159 together coordinate ATP. A domain IV, binds dsDNA region spans residues 328–449 (SLTNREVTVD…NDITKKLTQN (122 aa)).

The protein belongs to the DnaA family. In terms of assembly, oligomerizes as a right-handed, spiral filament on DNA at oriC.

It is found in the cytoplasm. In terms of biological role, plays an essential role in the initiation and regulation of chromosomal replication. ATP-DnaA binds to the origin of replication (oriC) to initiate formation of the DNA replication initiation complex once per cell cycle. Binds the DnaA box (a 9 base pair repeat at the origin) and separates the double-stranded (ds)DNA. Forms a right-handed helical filament on oriC DNA; dsDNA binds to the exterior of the filament while single-stranded (ss)DNA is stabiized in the filament's interior. The ATP-DnaA-oriC complex binds and stabilizes one strand of the AT-rich DNA unwinding element (DUE), permitting loading of DNA polymerase. After initiation quickly degrades to an ADP-DnaA complex that is not apt for DNA replication. Binds acidic phospholipids. In Clostridium beijerinckii (strain ATCC 51743 / NCIMB 8052) (Clostridium acetobutylicum), this protein is Chromosomal replication initiator protein DnaA.